Here is a 431-residue protein sequence, read N- to C-terminus: Cytochrome c oxidase subunit 3 (431 aa).

The next 7 helical transmembrane spans lie at Ile-70 to Ile-90, Phe-96 to Phe-116, Leu-132 to Trp-152, Val-176 to Ile-196, Leu-321 to Phe-341, Phe-356 to Ile-376, and Leu-408 to Trp-428.

It belongs to the cytochrome c oxidase subunit 3 family. Component of the cytochrome c oxidase (complex IV, CIV), a multisubunit enzyme composed of a catalytic core of 3 subunits and several supernumerary subunits. The complex exists as a monomer or a dimer and forms supercomplexes (SCs) in the inner mitochondrial membrane with ubiquinol-cytochrome c oxidoreductase (cytochrome b-c1 complex, complex III, CIII).

The protein resides in the mitochondrion inner membrane. It catalyses the reaction 4 Fe(II)-[cytochrome c] + O2 + 8 H(+)(in) = 4 Fe(III)-[cytochrome c] + 2 H2O + 4 H(+)(out). Its function is as follows. Component of the cytochrome c oxidase, the last enzyme in the mitochondrial electron transport chain which drives oxidative phosphorylation. The respiratory chain contains 3 multisubunit complexes succinate dehydrogenase (complex II, CII), ubiquinol-cytochrome c oxidoreductase (cytochrome b-c1 complex, complex III, CIII) and cytochrome c oxidase (complex IV, CIV), that cooperate to transfer electrons derived from NADH and succinate to molecular oxygen, creating an electrochemical gradient over the inner membrane that drives transmembrane transport and the ATP synthase. Cytochrome c oxidase is the component of the respiratory chain that catalyzes the reduction of oxygen to water. Electrons originating from reduced cytochrome c in the intermembrane space (IMS) are transferred via the dinuclear copper A center (CU(A)) of subunit 2 and heme A of subunit 1 to the active site in subunit 1, a binuclear center (BNC) formed by heme A3 and copper B (CU(B)). The BNC reduces molecular oxygen to 2 water molecules using 4 electrons from cytochrome c in the IMS and 4 protons from the mitochondrial matrix. This Dictyostelium citrinum (Slime mold) protein is Cytochrome c oxidase subunit 3 (cox3).